The chain runs to 162 residues: uncharacterized protein (162 aa).

Pentapeptide repeat domains follow at residues 33 to 72 (ASLI…NMTE), 73 to 112 (VCLI…DLRK), and 113 to 152 (ANLS…YISD).

This is an uncharacterized protein from Synechocystis sp. (strain ATCC 27184 / PCC 6803 / Kazusa).